The chain runs to 339 residues: Phosphoribosylformylglycinamidine cyclo-ligase (339 aa).

This sequence belongs to the AIR synthase family.

It is found in the cytoplasm. It catalyses the reaction 2-formamido-N(1)-(5-O-phospho-beta-D-ribosyl)acetamidine + ATP = 5-amino-1-(5-phospho-beta-D-ribosyl)imidazole + ADP + phosphate + H(+). Its pathway is purine metabolism; IMP biosynthesis via de novo pathway; 5-amino-1-(5-phospho-D-ribosyl)imidazole from N(2)-formyl-N(1)-(5-phospho-D-ribosyl)glycinamide: step 2/2. This is Phosphoribosylformylglycinamidine cyclo-ligase from Streptococcus thermophilus (strain ATCC BAA-250 / LMG 18311).